The primary structure comprises 108 residues: Nucleoid-associated protein BAV0915 (108 aa).

Belongs to the YbaB/EbfC family. In terms of assembly, homodimer.

Its subcellular location is the cytoplasm. It localises to the nucleoid. Functionally, binds to DNA and alters its conformation. May be involved in regulation of gene expression, nucleoid organization and DNA protection. The sequence is that of Nucleoid-associated protein BAV0915 from Bordetella avium (strain 197N).